A 69-amino-acid chain; its full sequence is Mitotic-spindle organizing protein 1 (69 aa).

Belongs to the MOZART1 family. Part of the gamma-tubulin complex.

It is found in the cytoplasm. It localises to the cytoskeleton. The protein localises to the microtubule organizing center. Its subcellular location is the spindle. Functionally, required for gamma-tubulin complex recruitment to the microtubule organizing centers (MTOCs). This is Mitotic-spindle organizing protein 1 from Picea sitchensis (Sitka spruce).